The following is a 500-amino-acid chain: Coiled-coil domain-containing protein 85A (500 aa).

Residues methionine 1 to serine 23 show a composition bias toward low complexity. The tract at residues methionine 1 to aspartate 30 is disordered. Coiled coils occupy residues glutamate 38–cysteine 104 and methionine 132–lysine 171. Disordered stretches follow at residues arginine 200–asparagine 405 and asparagine 426–proline 465. Over residues aspartate 204 to aspartate 215 the composition is skewed to low complexity. Residues histidine 231–leucine 254 are compositionally biased toward basic and acidic residues. Positions glycine 372–arginine 381 are enriched in gly residues. The segment covering glycine 383 to serine 395 has biased composition (basic and acidic residues). Residues methionine 404–leucine 429 are a coiled coil. Residues phenylalanine 434–proline 463 show a composition bias toward polar residues. Arginine 488 is subject to Asymmetric dimethylarginine.

This sequence belongs to the CCDC85 family. As to quaternary structure, may interact with ARVCF; CTNND1; CTNND2 and PKP4.

It is found in the cell junction. Its subcellular location is the adherens junction. Functionally, may play a role in cell-cell adhesion and epithelium development through its interaction with proteins of the beta-catenin family. This is Coiled-coil domain-containing protein 85A (Ccdc85a) from Mus musculus (Mouse).